The chain runs to 342 residues: N-acetyl-gamma-glutamyl-phosphate reductase (342 aa).

Cysteine 156 is an active-site residue.

It belongs to the NAGSA dehydrogenase family. Type 1 subfamily.

The protein localises to the cytoplasm. It carries out the reaction N-acetyl-L-glutamate 5-semialdehyde + phosphate + NADP(+) = N-acetyl-L-glutamyl 5-phosphate + NADPH + H(+). Its pathway is amino-acid biosynthesis; L-arginine biosynthesis; N(2)-acetyl-L-ornithine from L-glutamate: step 3/4. Its function is as follows. Catalyzes the NADPH-dependent reduction of N-acetyl-5-glutamyl phosphate to yield N-acetyl-L-glutamate 5-semialdehyde. This is N-acetyl-gamma-glutamyl-phosphate reductase from Pseudoalteromonas atlantica (strain T6c / ATCC BAA-1087).